The chain runs to 223 residues: Type 3 secretion system stator protein (223 aa).

It belongs to the SctL stator family. As to quaternary structure, the core secretion machinery of the T3SS is composed of approximately 20 different proteins, including cytoplasmic components, a base, an export apparatus and a needle. This subunit is part of the cytosolic complex. Interacts directly with YscN/SctN (T3SS ATPase) and YscQ/SctQ (the major sorting platform component). Forms homodimers.

It is found in the cytoplasm. Component of the type III secretion system (T3SS), also called injectisome, which is used to inject bacterial effector proteins into eukaryotic host cells. Acts as a regulator of the YscN/SctN ATPase activity. Overexpression of YscL/SctL abolishes type III secretion and down-regulates the expression of secretion apparatus components. The chain is Type 3 secretion system stator protein from Yersinia enterocolitica.